Reading from the N-terminus, the 97-residue chain is Putative ankyrin repeat protein RBE_0357 (97 aa).

One copy of the ANK repeat lies at Tyr24–Ile54.

This is Putative ankyrin repeat protein RBE_0357 from Rickettsia bellii (strain RML369-C).